The sequence spans 165 residues: Nucleotide-binding protein Pro_0479 (165 aa).

Belongs to the YajQ family.

Its function is as follows. Nucleotide-binding protein. In Prochlorococcus marinus (strain SARG / CCMP1375 / SS120), this protein is Nucleotide-binding protein Pro_0479.